A 241-amino-acid chain; its full sequence is Small ribosomal subunit protein uS2 (241 aa).

This sequence belongs to the universal ribosomal protein uS2 family.

The protein is Small ribosomal subunit protein uS2 of Buchnera aphidicola subsp. Cinara cedri (strain Cc).